A 185-amino-acid chain; its full sequence is Ribosome-recycling factor (185 aa).

The segment at 138–185 (ALKKQEKDGEITEDEERRLEKEVQKVTDESTKKIDQMADNKRKEIIQG) is disordered.

It belongs to the RRF family.

Its subcellular location is the cytoplasm. In terms of biological role, responsible for the release of ribosomes from messenger RNA at the termination of protein biosynthesis. May increase the efficiency of translation by recycling ribosomes from one round of translation to another. This chain is Ribosome-recycling factor, found in Lactobacillus delbrueckii subsp. bulgaricus (strain ATCC BAA-365 / Lb-18).